Here is a 460-residue protein sequence, read N- to C-terminus: CCA-adding enzyme (460 aa).

ATP contacts are provided by serine 50 and arginine 53. CTP contacts are provided by serine 50 and arginine 53. Positions 62, 64, and 117 each coordinate Mg(2+). Residues histidine 140, lysine 159, and tyrosine 168 each contribute to the ATP site. 3 residues coordinate CTP: histidine 140, lysine 159, and tyrosine 168.

It belongs to the tRNA nucleotidyltransferase/poly(A) polymerase family. Archaeal CCA-adding enzyme subfamily. Homodimer. Requires Mg(2+) as cofactor.

The catalysed reaction is a tRNA precursor + 2 CTP + ATP = a tRNA with a 3' CCA end + 3 diphosphate. It catalyses the reaction a tRNA with a 3' CCA end + 2 CTP + ATP = a tRNA with a 3' CCACCA end + 3 diphosphate. In terms of biological role, catalyzes the addition and repair of the essential 3'-terminal CCA sequence in tRNAs without using a nucleic acid template. Adds these three nucleotides in the order of C, C, and A to the tRNA nucleotide-73, using CTP and ATP as substrates and producing inorganic pyrophosphate. tRNA 3'-terminal CCA addition is required both for tRNA processing and repair. Also involved in tRNA surveillance by mediating tandem CCA addition to generate a CCACCA at the 3' terminus of unstable tRNAs. While stable tRNAs receive only 3'-terminal CCA, unstable tRNAs are marked with CCACCA and rapidly degraded. The sequence is that of CCA-adding enzyme from Methanoregula boonei (strain DSM 21154 / JCM 14090 / 6A8).